We begin with the raw amino-acid sequence, 122 residues long: Large ribosomal subunit protein uL14 (122 aa).

This sequence belongs to the universal ribosomal protein uL14 family. Part of the 50S ribosomal subunit. Forms a cluster with proteins L3 and L19. In the 70S ribosome, L14 and L19 interact and together make contacts with the 16S rRNA in bridges B5 and B8.

In terms of biological role, binds to 23S rRNA. Forms part of two intersubunit bridges in the 70S ribosome. In Thiobacillus denitrificans (strain ATCC 25259 / T1), this protein is Large ribosomal subunit protein uL14.